A 232-amino-acid chain; its full sequence is Ribonuclease 3 (232 aa).

One can recognise an RNase III domain in the interval 6–137 (QEMLKRDFNI…FIGALYLDQG (132 aa)). Glu50 lines the Mg(2+) pocket. Asp54 is an active-site residue. Asp123 and Glu126 together coordinate Mg(2+). Glu126 is a catalytic residue. Residues 163-232 (DNKTELQEVL…AYQALKKLRK (70 aa)) enclose the DRBM domain.

This sequence belongs to the ribonuclease III family. In terms of assembly, homodimer. Mg(2+) serves as cofactor.

The protein localises to the cytoplasm. The catalysed reaction is Endonucleolytic cleavage to 5'-phosphomonoester.. Functionally, digests double-stranded RNA. Involved in the processing of primary rRNA transcript to yield the immediate precursors to the large and small rRNAs (23S and 16S). Processes some mRNAs, and tRNAs when they are encoded in the rRNA operon. Processes pre-crRNA and tracrRNA of type II CRISPR loci if present in the organism. The polypeptide is Ribonuclease 3 (Ligilactobacillus salivarius (strain UCC118) (Lactobacillus salivarius)).